The chain runs to 73 residues: Protein SlyX homolog (73 aa).

It belongs to the SlyX family.

The protein is Protein SlyX homolog of Histophilus somni (strain 129Pt) (Haemophilus somnus).